A 413-amino-acid chain; its full sequence is Multidrug resistance protein MdtM (413 aa).

The Cytoplasmic portion of the chain corresponds to 1 to 14; that stretch reads MQRIIQFFSQRATT. A helical transmembrane segment spans residues 15–35; the sequence is LFFPMALILYDFAAYLTTDLI. The Periplasmic portion of the chain corresponds to 36 to 51; that stretch reads QPGIINVVRDFNADVS. Residues 52 to 72 form a helical membrane-spanning segment; it reads LAPASVSLYLAGGMALQWLLG. Residues 73-81 are Cytoplasmic-facing; the sequence is PLSDRIGRR. The chain crosses the membrane as a helical span at residues 82-102; it reads PVLIAGALIFTLACAATLLTT. Residues 103 to 106 are Periplasmic-facing; sequence SMTQ. A helical transmembrane segment spans residues 107–127; sequence FLVARFVQGTSICFIATVGYV. The Cytoplasmic segment spans residues 128–140; the sequence is TVQEAFGQTKAIK. The helical transmembrane segment at 141 to 161 threads the bilayer; that stretch reads LMAIITSIVLVAPVIGPLSGA. The Periplasmic segment spans residues 162–170; the sequence is ALMHFVHWK. Residues 171 to 191 form a helical membrane-spanning segment; sequence VLFGIIAVMGLLALCGLLLAM. At 192–225 the chain is on the cytoplasmic side; the sequence is PETVQRGAVPFSAVSVLRDFRNVFRNPIFLTGAA. Residues 226–246 form a helical membrane-spanning segment; sequence TLSLSYIPMMSWVAVSPVILI. Topologically, residues 247–254 are periplasmic; that stretch reads DAGGMSTS. A helical membrane pass occupies residues 255-275; the sequence is QFAWAQVPVFGAVIVANMIVV. At 276 to 289 the chain is on the cytoplasmic side; sequence RLVKDPTRPRFIWR. 2 helical membrane passes run 290 to 310 and 311 to 331; these read AVPI…LLPH and VWLW…MIFP. The Cytoplasmic portion of the chain corresponds to 332–351; it reads TLFRFTLFSNNLPKGTVSAS. A helical membrane pass occupies residues 352–372; the sequence is LNMVILTVMAVSVEVGRWLWF. Residues 373–376 lie on the Periplasmic side of the membrane; it reads HGGR. Residues 377–397 form a helical membrane-spanning segment; it reads LPFHLLAAVAGVIVVFTLATL. Topologically, residues 398–413 are cytoplasmic; that stretch reads LQRVRQHEAAELAAEK.

The protein belongs to the major facilitator superfamily.

It is found in the cell inner membrane. Its function is as follows. Proton-dependent efflux pump. Confers resistance to a broad spectrum of chemically unrelated substrates. This chain is Multidrug resistance protein MdtM (mdtM), found in Salmonella typhimurium (strain LT2 / SGSC1412 / ATCC 700720).